The chain runs to 158 residues: NADH-quinone oxidoreductase subunit B (158 aa).

Positions 37, 38, 102, and 132 each coordinate [4Fe-4S] cluster.

This sequence belongs to the complex I 20 kDa subunit family. NDH-1 is composed of 14 different subunits. Subunits NuoB, C, D, E, F, and G constitute the peripheral sector of the complex. [4Fe-4S] cluster is required as a cofactor.

It localises to the cell inner membrane. The enzyme catalyses a quinone + NADH + 5 H(+)(in) = a quinol + NAD(+) + 4 H(+)(out). Functionally, NDH-1 shuttles electrons from NADH, via FMN and iron-sulfur (Fe-S) centers, to quinones in the respiratory chain. Couples the redox reaction to proton translocation (for every two electrons transferred, four hydrogen ions are translocated across the cytoplasmic membrane), and thus conserves the redox energy in a proton gradient. In Bordetella avium (strain 197N), this protein is NADH-quinone oxidoreductase subunit B.